The following is an 841-amino-acid chain: Protein translocase subunit SecA (841 aa).

Residues glutamine 87, glycine 105–threonine 109, and aspartate 494 contribute to the ATP site. The Zn(2+) site is built by cysteine 825, cysteine 827, cysteine 836, and cysteine 837.

It belongs to the SecA family. In terms of assembly, monomer and homodimer. Part of the essential Sec protein translocation apparatus which comprises SecA, SecYEG and auxiliary proteins SecDF-YajC and YidC. Zn(2+) serves as cofactor.

It is found in the cell inner membrane. The protein localises to the cytoplasm. It catalyses the reaction ATP + H2O + cellular proteinSide 1 = ADP + phosphate + cellular proteinSide 2.. Functionally, part of the Sec protein translocase complex. Interacts with the SecYEG preprotein conducting channel. Has a central role in coupling the hydrolysis of ATP to the transfer of proteins into and across the cell membrane, serving as an ATP-driven molecular motor driving the stepwise translocation of polypeptide chains across the membrane. The sequence is that of Protein translocase subunit SecA from Syntrophus aciditrophicus (strain SB).